We begin with the raw amino-acid sequence, 359 residues long: MPLSRLIINDFRNIETCDIQLSTGFNFVIGPNGSGKTSVLEAIYLLGHGRSFKSSLTGRIIRNSCDELFIHGRFTTPEQFELPIGINKQRDGTTEVKIGGESGQKLAQLAKVLPLQLIHPEGFELVTDGPKFRRAFIDWGVFHVEPAFYEAWSRVKRLTKQRNALLKTAQSYRELSYWDLELANLAEKIDQWRVDYINHISEATQQICQAFLPEYDIKLSYYRGWERETPYAELLKRNFERDKQLGYTVGGPNKADLRIKVAGTPVEDVLSRGQLKLMVCALRLAQGQHLTEATGKQCIYLIDDFASELDSHRRQLLAQYLKQTKAQVFISSITAEQIADMHDEESKMFEIEHGKIAQG.

30 to 37 (GPNGSGKT) is an ATP binding site.

The protein belongs to the RecF family.

Its subcellular location is the cytoplasm. Functionally, the RecF protein is involved in DNA metabolism; it is required for DNA replication and normal SOS inducibility. RecF binds preferentially to single-stranded, linear DNA. It also seems to bind ATP. This chain is DNA replication and repair protein RecF, found in Aliivibrio salmonicida (strain LFI1238) (Vibrio salmonicida (strain LFI1238)).